Here is a 476-residue protein sequence, read N- to C-terminus: Homeobox even-skipped homolog protein 2 (476 aa).

2 disordered regions span residues 82-113 (TGSESTVSSEISSAAESRKKPGHYSEAAAEAD) and 142-185 (KGYA…GSGA). 2 stretches are compositionally biased toward low complexity: residues 84 to 96 (SESTVSSEISSAA) and 147 to 159 (SGSAAGTTTSASG). Gly residues predominate over residues 160 to 183 (SGLGSLHGGSGGSGGSAALGGSGS). The homeobox DNA-binding region spans 188–247 (VRRYRTAFTREQIARLEKEFYRENYVSRPRRCELAAALNLPETTIKVWFQNRRMKDKRQR).

The protein belongs to the even-skipped homeobox family.

The protein resides in the nucleus. This Homo sapiens (Human) protein is Homeobox even-skipped homolog protein 2 (EVX2).